We begin with the raw amino-acid sequence, 159 residues long: Neurotrophin-3 (159 aa).

Residues 1-3 (IQS) form the signal peptide. The propeptide occupies 4 to 115 (TSMDQGILTE…VQNRTSRRKR (112 aa)). Residues 91 to 129 (APLEPPPLYLTEEPLVQNRTSRRKREGKRHRGEYSVCDS) are disordered. A glycan (N-linked (GlcNAc...) asparagine) is linked at asparagine 108. The segment covering 110 to 121 (TSRRKREGKRHR) has biased composition (basic residues).

The protein belongs to the NGF-beta family.

The protein localises to the secreted. Its function is as follows. Seems to promote the survival of visceral and proprioceptive sensory neurons. This Candoia carinata (Papuan tree boa) protein is Neurotrophin-3 (NTF3).